The sequence spans 177 residues: Large ribosomal subunit protein uL6 (177 aa).

The protein belongs to the universal ribosomal protein uL6 family. As to quaternary structure, part of the 50S ribosomal subunit.

Its function is as follows. This protein binds to the 23S rRNA, and is important in its secondary structure. It is located near the subunit interface in the base of the L7/L12 stalk, and near the tRNA binding site of the peptidyltransferase center. The protein is Large ribosomal subunit protein uL6 of Afipia carboxidovorans (strain ATCC 49405 / DSM 1227 / KCTC 32145 / OM5) (Oligotropha carboxidovorans).